A 112-amino-acid polypeptide reads, in one-letter code: MTTLRKRLCLATLLSLTALAFTAPVSAQTSKLIIESGDSAQSRQNAAMDKEQWNDTRNLRQKVNKRAEKEWDKEDVAFDSRDKCQQSANVNAYWEANTLRCLDRRTGRTVAP.

The first 27 residues, 1 to 27 (MTTLRKRLCLATLLSLTALAFTAPVSA), serve as a signal peptide directing secretion.

Belongs to the UPF0482 family.

The sequence is that of UPF0482 protein Ent638_1930 from Enterobacter sp. (strain 638).